The primary structure comprises 425 residues: CinA-like protein (425 aa).

This sequence belongs to the CinA family.

The chain is CinA-like protein from Trichodesmium erythraeum (strain IMS101).